A 233-amino-acid polypeptide reads, in one-letter code: Probable translation initiation factor, mitochondrial (233 aa).

The transit peptide at M1–S39 directs the protein to the mitochondrion.

It belongs to the IF-3 family.

Its subcellular location is the mitochondrion. Functionally, may be involved in mitochondrial translation initiation. This chain is Probable translation initiation factor, mitochondrial, found in Schizosaccharomyces pombe (strain 972 / ATCC 24843) (Fission yeast).